The primary structure comprises 176 residues: Thiol:disulfide interchange protein HelX (176 aa).

The signal sequence occupies residues 1-19 (MAKPLMFLPLLVMAGFVGA). The region spanning 35 to 172 (ALAGKEAPAV…ITKKIDPLLA (138 aa)) is the Thioredoxin domain. An intrachain disulfide couples C75 to C78.

It belongs to the thioredoxin family. DsbE subfamily.

It localises to the periplasm. Functionally, required for disulfide bond formation in some periplasmic proteins. Also acts as a disulfide oxidoreductase in cytochromes c biogenesis. The cysteines of apocytochromes c must be in the reduced state for covalent linkage between the two moieties to occur. The polypeptide is Thiol:disulfide interchange protein HelX (helX) (Rhodobacter capsulatus (strain ATCC BAA-309 / NBRC 16581 / SB1003)).